The chain runs to 431 residues: SPI-1 type 3 secretion system ATPase (431 aa).

162–167 serves as a coordination point for ATP; it reads GCGKTM.

It belongs to the ATPase alpha/beta chains family. T3SS ATPase subfamily. The core secretion machinery of the T3SS is composed of approximately 20 different proteins, including cytoplasmic components, a base, an export apparatus and a needle. This subunit is part of the cytosolic complex. Forms homohexamers.

It is found in the cytoplasm. It catalyses the reaction ATP + H2O + cellular proteinSide 1 = ADP + phosphate + cellular proteinSide 2.. Its function is as follows. ATPase component of the type III secretion system (T3SS), also called injectisome, which is used to inject bacterial effector proteins into eukaryotic host cells. Acts as a molecular motor to provide the energy that is required for the export of proteins. Required for type III secretion apparatus (T3SA) formation, proper protein secretion, host cell invasion and virulence. May play a critical role in T3SS substrate recognition, disassembly of the effector/chaperone complex and unfolding of the effector in an ATP-dependent manner prior to secretion. In Salmonella typhi, this protein is SPI-1 type 3 secretion system ATPase.